A 378-amino-acid polypeptide reads, in one-letter code: Anhydro-N-acetylmuramic acid kinase (378 aa).

9-16 (GTSADGID) serves as a coordination point for ATP.

This sequence belongs to the anhydro-N-acetylmuramic acid kinase family.

It carries out the reaction 1,6-anhydro-N-acetyl-beta-muramate + ATP + H2O = N-acetyl-D-muramate 6-phosphate + ADP + H(+). The protein operates within amino-sugar metabolism; 1,6-anhydro-N-acetylmuramate degradation. Its pathway is cell wall biogenesis; peptidoglycan recycling. Its function is as follows. Catalyzes the specific phosphorylation of 1,6-anhydro-N-acetylmuramic acid (anhMurNAc) with the simultaneous cleavage of the 1,6-anhydro ring, generating MurNAc-6-P. Is required for the utilization of anhMurNAc either imported from the medium or derived from its own cell wall murein, and thus plays a role in cell wall recycling. This is Anhydro-N-acetylmuramic acid kinase from Synechococcus sp. (strain ATCC 27144 / PCC 6301 / SAUG 1402/1) (Anacystis nidulans).